Reading from the N-terminus, the 119-residue chain is Putative F420H(2)-dependent quinone reductase Rv3178 (119 aa).

Coenzyme F420-(gamma-Glu)n is bound by residues 21–23 (RKS), 27–32 (FVAPLL), 43–46 (VASA), and 54–58 (QWYRN).

The protein belongs to the F420H(2)-dependent quinone reductase family.

It is found in the cell membrane. The catalysed reaction is oxidized coenzyme F420-(gamma-L-Glu)(n) + a quinol + H(+) = reduced coenzyme F420-(gamma-L-Glu)(n) + a quinone. Its function is as follows. Involved in a F420-dependent anti-oxidant mechanism that protects M.tuberculosis against oxidative stress and bactericidal agents. Catalyzes the F420H(2)-dependent two-electron reduction of quinones to dihydroquinones, thereby preventing the formation of cytotoxic semiquinones obtained by the one-electron reduction pathway. Since menaquinone is the sole quinone electron carrier in the respiratory chain in M.tuberculosis, the physiological electron acceptor for Fqr-mediated F420H(2) oxidation is therefore likely to be the endogenous menaquinone found in the membrane fraction of M.tuberculosis. The protein is Putative F420H(2)-dependent quinone reductase Rv3178 of Mycobacterium tuberculosis (strain ATCC 25618 / H37Rv).